A 188-amino-acid polypeptide reads, in one-letter code: Small ribosomal subunit protein uS7 (188 aa).

It belongs to the universal ribosomal protein uS7 family. As to quaternary structure, part of the 30S ribosomal subunit.

One of the primary rRNA binding proteins, it binds directly to 16S rRNA where it nucleates assembly of the head domain of the 30S subunit. Is located at the subunit interface close to the decoding center. The sequence is that of Small ribosomal subunit protein uS7 from Methanococcus maripaludis (strain C7 / ATCC BAA-1331).